Reading from the N-terminus, the 445-residue chain is DDB1- and CUL4-associated factor 13 (445 aa).

Lys-49 carries the post-translational modification N6-acetyllysine. 7 WD repeats span residues 64–104 (GHRD…CIRT), 107–146 (AHEG…YGDE), 149–191 (PLHT…PICS), 194–234 (WGFD…PLKK), 236–276 (ILDM…TPVM), 280–319 (DHVS…SREV), and 323–362 (KRMQ…KLGV). Residues 353-441 (KANASEKLGV…LVSEKKKHVV (89 aa)) form a required for nucleolar location region.

The protein belongs to the WD repeat DCAF13/WDSOF1 family. In terms of assembly, part of the small subunit (SSU) processome, composed of more than 70 proteins and the RNA chaperone small nucleolar RNA (snoRNA) U3. Component of the DCX(DCAF13) E3 ubiquitin ligase complex, at least composed of CUL4 (CUL4A or CUL4B), DDB1, DCAF13 and RBX1. Interacts (via WD40 domain) with DDB1. Interacts with ESR1 and LATS1. In terms of tissue distribution, expressed in the endometrium during decidualization. Expression is down-regulated in preeclampsia decidual tissues.

The protein localises to the nucleus. It localises to the nucleolus. Its pathway is protein modification; protein ubiquitination. Part of the small subunit (SSU) processome, first precursor of the small eukaryotic ribosomal subunit. During the assembly of the SSU processome in the nucleolus, many ribosome biogenesis factors, an RNA chaperone and ribosomal proteins associate with the nascent pre-rRNA and work in concert to generate RNA folding, modifications, rearrangements and cleavage as well as targeted degradation of pre-ribosomal RNA by the RNA exosome. Participates in the 18S rRNA processing in growing oocytes, being essential for oocyte nonsurrounded nucleolus (NSN) to surrounded nucleolus (SN) transition. Functionally, substrate-recognition component of a DCX (DDB1-CUL4-X-box) E3 ubiquitin-protein ligase complex that plays a key role in embryo preimplantation and is required for normal meiotic cycle progression in oocytes. Acts as a maternal factor that regulates oocyte and zygotic chromatin tightness during maternal to zygotic transition. Also involved in the transformation of the endometrium into the decidua, known as decidualization, providing a solid foundation for implantation of blastocysts. Recognizes the histone methyltransferases SUV39H1 and SUV39H2 and directs them to polyubiquitination and proteasomal degradation, which facilitates the H3K9me3 removal and early zygotic gene expression, essential steps for progressive genome reprogramming and the establishment of pluripotency during preimplantation embryonic development. Supports the spindle assembly and chromosome condensation during oocyte meiotic division by targeting the polyubiquitination and degradation of PTEN, a lipid phosphatase that inhibits PI3K pathway as well as oocyte growth and maturation. Targets PMP22 for polyubiquitination and proteasomal degradation. The chain is DDB1- and CUL4-associated factor 13 from Homo sapiens (Human).